Reading from the N-terminus, the 496-residue chain is Glutamyl-tRNA(Gln) amidotransferase subunit A (496 aa).

Active-site charge relay system residues include lysine 75 and serine 150. Serine 174 functions as the Acyl-ester intermediate in the catalytic mechanism.

The protein belongs to the amidase family. GatA subfamily. In terms of assembly, heterotrimer of A, B and C subunits.

It carries out the reaction L-glutamyl-tRNA(Gln) + L-glutamine + ATP + H2O = L-glutaminyl-tRNA(Gln) + L-glutamate + ADP + phosphate + H(+). In terms of biological role, allows the formation of correctly charged Gln-tRNA(Gln) through the transamidation of misacylated Glu-tRNA(Gln) in organisms which lack glutaminyl-tRNA synthetase. The reaction takes place in the presence of glutamine and ATP through an activated gamma-phospho-Glu-tRNA(Gln). The protein is Glutamyl-tRNA(Gln) amidotransferase subunit A of Burkholderia pseudomallei (strain 668).